A 955-amino-acid polypeptide reads, in one-letter code: MAPHQNVRPETVLKRTDELIAVGQQDAALELLHETVSARKARTTSVATLEPIVARFVQLSVDLRKGKIIKDGLHQYKKIVQSTNVNAIEPVIKQFLSLAEQRVTDAQAQADKIADEEEADDLEAEETPEDLLLATVSSEDTKDRTDRRVVTPWLKFLWEAYRSVLDVLRNNSKLEVIYQQVVEQAFNFCLKFSRKTEFRRLCELLRSHLQTTAQKGPNAPPVTATSVDLSDADTLQRYLDTRFSQLNVAVKLELWQEAFRSVEDVHTLLTVSKRPAKPLMMGNYYENLARIFLVAGNYLFHAAAWNKLFHLLSQSPRGAIPVSEYQRVASFVLLSALAIPHNSSAEDRYRNTRLTGLLNLQRTPTRDALLKSALSRNILAHVKPEIKALYKTLEVDFHPLSIRAKLTPVVGAIAEAPEFKPYFAPLYQVILTRLFQQLSQVYESVKLDFVIQLATFPAPFSATPLEIEQFIVRACAQGELAIKIDHDQRSVLFEEVRAATGSASLQDTPIEIVRTQLSRLGRTLSVADPLNSAEAREQQYVAALTTAQDNAEREHAETLARRAEIEARKAQAEAERAQREEEEARKRAQRLLDEELAEKERLAAEQHARELERIRKEQDAIREEEKKKLAEEINAKGIITIDLDKLEGLDTNALRKMQVDQLAKETKELGDRLRVTARRIDHTERAYRMEEIKLVEDDFVKQKQRDREIYDTRIKLIKDTAKAEHDAKVELAKRLQRAVPFYKSFRDDIRVKREAEFTRLREEAVKNLAEAKAARIEEVKAKRIADAKRAEEEAKAAAEAEAKAAAEAEAKAKAEQEMREKLLAEKKAREEANARADAAYEKQRQKEAELEAKLEAKRAGFSGAGRQAPPSGGYVPPSRREGGYVPPSRRGDAGAAPGAGSGGYTPPSRREGGGGGYVPPSRREGGGGGYVPPSRREGGSGAGSGGRYIPPSQRN.

Residues 96-127 (LSLAEQRVTDAQAQADKIADEEEADDLEAEET) adopt a coiled-coil conformation. A PCI domain is found at 325-498 (YQRVASFVLL…RSVLFEEVRA (174 aa)). 2 coiled-coil regions span residues 533 to 636 (AEAR…INAK) and 752 to 860 (KREA…KRAG). Positions 789–858 (RAEEEAKAAA…ELEAKLEAKR (70 aa)) are enriched in basic and acidic residues. Residues 789–955 (RAEEEAKAAA…GRYIPPSQRN (167 aa)) are disordered.

This sequence belongs to the eIF-3 subunit A family. Component of the eukaryotic translation initiation factor 3 (eIF-3) complex.

The protein localises to the cytoplasm. RNA-binding component of the eukaryotic translation initiation factor 3 (eIF-3) complex, which is involved in protein synthesis of a specialized repertoire of mRNAs and, together with other initiation factors, stimulates binding of mRNA and methionyl-tRNAi to the 40S ribosome. The eIF-3 complex specifically targets and initiates translation of a subset of mRNAs involved in cell proliferation. This chain is Eukaryotic translation initiation factor 3 subunit A, found in Yarrowia lipolytica (strain CLIB 122 / E 150) (Yeast).